Consider the following 432-residue polypeptide: UDP-N-acetylglucosamine 1-carboxyvinyltransferase (432 aa).

Residue 22–23 (KN) coordinates phosphoenolpyruvate. Arginine 92 lines the UDP-N-acetyl-alpha-D-glucosamine pocket. The active-site Proton donor is cysteine 116. Cysteine 116 is modified (2-(S-cysteinyl)pyruvic acid O-phosphothioketal). Residues 121-125 (RPVDQ), aspartate 307, and isoleucine 329 contribute to the UDP-N-acetyl-alpha-D-glucosamine site.

It belongs to the EPSP synthase family. MurA subfamily.

It localises to the cytoplasm. The enzyme catalyses phosphoenolpyruvate + UDP-N-acetyl-alpha-D-glucosamine = UDP-N-acetyl-3-O-(1-carboxyvinyl)-alpha-D-glucosamine + phosphate. It functions in the pathway cell wall biogenesis; peptidoglycan biosynthesis. Functionally, cell wall formation. Adds enolpyruvyl to UDP-N-acetylglucosamine. In Psychrobacter sp. (strain PRwf-1), this protein is UDP-N-acetylglucosamine 1-carboxyvinyltransferase.